The primary structure comprises 697 residues: CENP-A multicopy suppressor protein 2 (697 aa).

The segment at 351 to 378 (CQNCGTIKTANWRNATYMNITLMLCNAC) adopts a GATA-type; atypical zinc-finger fold. Residues 443 to 484 (PLNRLTSLDSTHSAPDPNHISKPSVVNQQKSRGGPRTAKLKN) form a disordered region. A compositionally biased stretch (polar residues) spans 445-455 (NRLTSLDSTHS).

Interacts with CENP-A.

Its subcellular location is the nucleus. The protein resides in the chromosome. It is found in the centromere. Required for proper chromosome segregation via regulation of CENP-A localization to the centromere. The sequence is that of CENP-A multicopy suppressor protein 2 (ams2) from Schizosaccharomyces pombe (strain 972 / ATCC 24843) (Fission yeast).